Reading from the N-terminus, the 566-residue chain is Glutamate--tRNA ligase (566 aa).

A 'HIGH' region motif is present at residues 104-114; that stretch reads PNPDGPLHLGN.

It belongs to the class-I aminoacyl-tRNA synthetase family. Glutamate--tRNA ligase type 2 subfamily.

It localises to the cytoplasm. The enzyme catalyses tRNA(Glu) + L-glutamate + ATP = L-glutamyl-tRNA(Glu) + AMP + diphosphate. Its function is as follows. Catalyzes the attachment of glutamate to tRNA(Glu) in a two-step reaction: glutamate is first activated by ATP to form Glu-AMP and then transferred to the acceptor end of tRNA(Glu). The protein is Glutamate--tRNA ligase of Metallosphaera sedula (strain ATCC 51363 / DSM 5348 / JCM 9185 / NBRC 15509 / TH2).